The primary structure comprises 318 residues: 4-diphosphocytidyl-2-C-methyl-D-erythritol kinase (318 aa).

Lys-25 is a catalytic residue. 110-120 (PVAGGMAGGSA) contacts ATP. Asp-152 is an active-site residue.

This sequence belongs to the GHMP kinase family. IspE subfamily.

It carries out the reaction 4-CDP-2-C-methyl-D-erythritol + ATP = 4-CDP-2-C-methyl-D-erythritol 2-phosphate + ADP + H(+). Its pathway is isoprenoid biosynthesis; isopentenyl diphosphate biosynthesis via DXP pathway; isopentenyl diphosphate from 1-deoxy-D-xylulose 5-phosphate: step 3/6. Its function is as follows. Catalyzes the phosphorylation of the position 2 hydroxy group of 4-diphosphocytidyl-2C-methyl-D-erythritol. The polypeptide is 4-diphosphocytidyl-2-C-methyl-D-erythritol kinase (Mycobacterium tuberculosis (strain ATCC 25177 / H37Ra)).